Here is a 256-residue protein sequence, read N- to C-terminus: Pimeloyl-[acyl-carrier protein] methyl ester esterase (256 aa).

An AB hydrolase-1 domain is found at 15-242 (HLVLLHGWGL…AAHAPFISHP (228 aa)). Substrate-binding positions include Trp22, 82–83 (SL), and 143–147 (FLALQ). Ser82 (nucleophile) is an active-site residue. Active-site residues include Asp207 and His235. His235 is a binding site for substrate.

It belongs to the AB hydrolase superfamily. Carboxylesterase BioH family. As to quaternary structure, monomer.

It localises to the cytoplasm. It carries out the reaction 6-carboxyhexanoyl-[ACP] methyl ester + H2O = 6-carboxyhexanoyl-[ACP] + methanol + H(+). The protein operates within cofactor biosynthesis; biotin biosynthesis. In terms of biological role, the physiological role of BioH is to remove the methyl group introduced by BioC when the pimeloyl moiety is complete. It allows to synthesize pimeloyl-ACP via the fatty acid synthetic pathway through the hydrolysis of the ester bonds of pimeloyl-ACP esters. This Escherichia coli O81 (strain ED1a) protein is Pimeloyl-[acyl-carrier protein] methyl ester esterase.